We begin with the raw amino-acid sequence, 244 residues long: Nonsense-mediated decay protein 4 (244 aa).

The protein localises to the cytoplasm. Functionally, involved in nonsense-mediated decay of mRNAs containing premature stop codons. This is Nonsense-mediated decay protein 4 (NMD4) from Kluyveromyces lactis (strain ATCC 8585 / CBS 2359 / DSM 70799 / NBRC 1267 / NRRL Y-1140 / WM37) (Yeast).